A 178-amino-acid chain; its full sequence is PRA1 family protein 2 (178 aa).

At 1-41 (MSEVRLPPLRALDDFVLGSARLAAPDPCDPQRWCHRVINNL) the chain is on the cytoplasmic side. A helical transmembrane segment spans residues 42–62 (LYYQTNYLLCFGIGLALAGYV). The Extracellular segment spans residues 63–64 (RP). The helical transmembrane segment at 65 to 85 (LHTLLSALVVAVALGMLVWAA) threads the bilayer. Residues 86 to 96 (ETRAAVRRCRR) are Cytoplasmic-facing. The chain crosses the membrane as a helical span at residues 97-119 (SHPAACLAAVLAVGLLVLWVVGG). Topologically, residues 120–122 (ACT) are extracellular. Residues 123 to 140 (FLLSIAGPVLLILVHASL) traverse the membrane as a helical segment. The Cytoplasmic portion of the chain corresponds to 141 to 178 (RLRNLKNKIENKIESIGLKRTPMGLLLEALGQEQEAGS).

It belongs to the PRA1 family. Interacts with CCR5 and GDE1.

It is found in the endosome membrane. In terms of biological role, may be involved in ER/Golgi transport and vesicular traffic. Plays a proapoptotic role in cerulenin-induced neuroblastoma apoptosis. In Macaca fascicularis (Crab-eating macaque), this protein is PRA1 family protein 2 (PRAF2).